Consider the following 261-residue polypeptide: 3-hydroxyacyl-CoA dehydrogenase type-2 (261 aa).

Position 2 is an N-acetylalanine (alanine 2). Positions 20, 22, and 41 each coordinate NAD(+). Lysine 53 bears the N6-acetyllysine; alternate mark. Lysine 53 carries the post-translational modification N6-succinyllysine; alternate. NAD(+)-binding residues include aspartate 64 and valine 65. Lysine 69 carries the post-translational modification N6-acetyllysine. Residue cysteine 91 participates in NAD(+) binding. N6-acetyllysine occurs at positions 99 and 105. Residue serine 155 participates in substrate binding. NAD(+)-binding residues include tyrosine 168, lysine 172, phenylalanine 201, and threonine 203. Residue tyrosine 168 is the Proton acceptor of the active site. Residue lysine 212 is modified to N6-acetyllysine; alternate. The residue at position 212 (lysine 212) is an N6-succinyllysine; alternate.

Belongs to the short-chain dehydrogenases/reductases (SDR) family. As to quaternary structure, homotetramer. Component of mitochondrial ribonuclease P, a complex composed of TRMT10C/MRPP1, HSD17B10/MRPP2 and PRORP/MRPP3. Interacts with TRMT10C/MRPP1; forming the MRPP1-MRPP2 subcomplex of the mitochondrial ribonuclease P complex. In terms of tissue distribution, ubiquitously expressed in normal tissues but is overexpressed in neurons affected in AD.

The protein resides in the mitochondrion. It localises to the mitochondrion matrix. It is found in the mitochondrion nucleoid. It carries out the reaction a (3S)-3-hydroxyacyl-CoA + NAD(+) = a 3-oxoacyl-CoA + NADH + H(+). The enzyme catalyses (2S,3S)-3-hydroxy-2-methylbutanoyl-CoA + NAD(+) = 2-methyl-3-oxobutanoyl-CoA + NADH + H(+). It catalyses the reaction testosterone + NAD(+) = androst-4-ene-3,17-dione + NADH + H(+). The catalysed reaction is 5alpha-androstane-3alpha,17beta-diol + NAD(+) = 17beta-hydroxy-5alpha-androstan-3-one + NADH + H(+). It carries out the reaction 17beta-estradiol + NAD(+) = estrone + NADH + H(+). The enzyme catalyses cholate + NAD(+) = 3alpha,12alpha-dihydroxy-7-oxo-5beta-cholanate + NADH + H(+). It catalyses the reaction (3S)-3-hydroxybutanoyl-CoA + NAD(+) = acetoacetyl-CoA + NADH + H(+). The catalysed reaction is (3S)-hydroxyoctanoyl-CoA + NAD(+) = 3-oxooctanoyl-CoA + NADH + H(+). It carries out the reaction (3S)-hydroxyhexadecanoyl-CoA + NAD(+) = 3-oxohexadecanoyl-CoA + NADH + H(+). The enzyme catalyses 17beta-hydroxy-5alpha-androstan-3-one + NAD(+) = 5alpha-androstan-3,17-dione + NADH + H(+). It catalyses the reaction 5alpha-pregnan-20beta-ol-3-one + NAD(+) = 5alpha-pregnane-3,20-dione + NADH + H(+). The catalysed reaction is 3alpha-hydroxy-5alpha-pregnan-20-one + NAD(+) = 5alpha-pregnane-3,20-dione + NADH + H(+). It carries out the reaction cortisone + NAD(+) = 17alpha-hydroxypregn-4-en-3,11,20-trione-21-al + NADH + H(+). The enzyme catalyses 11-dehydrocorticosterone + NAD(+) = pregn-4-ene-3,11,20,21-tetraone + NADH + H(+). It catalyses the reaction cortisol + NAD(+) = 11beta,17alpha-dihydroxypregn-4-ene-3,20,21-trione + NADH + H(+). The catalysed reaction is chenodeoxycholate + NAD(+) = 7-oxolithocholate + NADH + H(+). It carries out the reaction ursodeoxycholate + NAD(+) = 7-oxolithocholate + NADH + H(+). The enzyme catalyses 3beta,7beta-dihydroxy-5beta-cholan-24-oate + NAD(+) = 3beta-hydroxy-7-oxo-5beta-cholan-24-oate + NADH + H(+). It participates in amino-acid degradation; L-isoleucine degradation. The protein operates within lipid metabolism; fatty acid beta-oxidation. It functions in the pathway steroid metabolism. Its pathway is lipid metabolism; bile acid biosynthesis. With respect to regulation, the phospholipase C-like activity toward cardiolipin is inhibited by amyloid-beta peptide. Mitochondrial dehydrogenase involved in pathways of fatty acid, branched-chain amino acid and steroid metabolism. Acts as (S)-3-hydroxyacyl-CoA dehydrogenase in mitochondrial fatty acid beta-oxidation, a major degradation pathway of fatty acids. Catalyzes the third step in the beta-oxidation cycle, namely the reversible conversion of (S)-3-hydroxyacyl-CoA to 3-ketoacyl-CoA. Preferentially accepts straight medium- and short-chain acyl-CoA substrates with highest efficiency for (3S)-hydroxybutanoyl-CoA. Acts as 3-hydroxy-2-methylbutyryl-CoA dehydrogenase in branched-chain amino acid catabolic pathway. Catalyzes the oxidation of 3-hydroxy-2-methylbutanoyl-CoA into 2-methyl-3-oxobutanoyl-CoA, a step in isoleucine degradation pathway. Has hydroxysteroid dehydrogenase activity toward steroid hormones and bile acids. Catalyzes the oxidation of 3alpha-, 17beta-, 20beta- and 21-hydroxysteroids and 7alpha- and 7beta-hydroxy bile acids. Oxidizes allopregnanolone/brexanolone at the 3alpha-hydroxyl group, which is known to be critical for the activation of gamma-aminobutyric acid receptors (GABAARs) chloride channel. Has phospholipase C-like activity toward cardiolipin and its oxidized species. Likely oxidizes the 2'-hydroxyl in the head group of cardiolipin to form a ketone intermediate that undergoes nucleophilic attack by water and fragments into diacylglycerol, dihydroxyacetone and orthophosphate. Has higher affinity for cardiolipin with oxidized fatty acids and may degrade these species during the oxidative stress response to protect cells from apoptosis. By interacting with intracellular amyloid-beta, it may contribute to the neuronal dysfunction associated with Alzheimer disease (AD). Essential for structural and functional integrity of mitochondria. Its function is as follows. In addition to mitochondrial dehydrogenase activity, moonlights as a component of mitochondrial ribonuclease P, a complex that cleaves tRNA molecules in their 5'-ends. Together with TRMT10C/MRPP1, forms a subcomplex of the mitochondrial ribonuclease P, named MRPP1-MRPP2 subcomplex, which displays functions that are independent of the ribonuclease P activity. The MRPP1-MRPP2 subcomplex catalyzes the formation of N(1)-methylguanine and N(1)-methyladenine at position 9 (m1G9 and m1A9, respectively) in tRNAs; HSD17B10/MRPP2 acting as a non-catalytic subunit. The MRPP1-MRPP2 subcomplex also acts as a tRNA maturation platform: following 5'-end cleavage by the mitochondrial ribonuclease P complex, the MRPP1-MRPP2 subcomplex enhances the efficiency of 3'-processing catalyzed by ELAC2, retains the tRNA product after ELAC2 processing and presents the nascent tRNA to the mitochondrial CCA tRNA nucleotidyltransferase TRNT1 enzyme. Associates with mitochondrial DNA complexes at the nucleoids to initiate RNA processing and ribosome assembly. The chain is 3-hydroxyacyl-CoA dehydrogenase type-2 (HSD17B10) from Homo sapiens (Human).